The sequence spans 397 residues: Phosphoglycerate kinase (397 aa).

Substrate contacts are provided by residues 21 to 23, Arg37, 60 to 63, Arg119, and Arg152; these read DFN and HLGR. ATP contacts are provided by residues Lys203, Gly294, Glu325, and 354–357; that span reads GGDS.

The protein belongs to the phosphoglycerate kinase family. In terms of assembly, monomer.

Its subcellular location is the cytoplasm. It carries out the reaction (2R)-3-phosphoglycerate + ATP = (2R)-3-phospho-glyceroyl phosphate + ADP. It functions in the pathway carbohydrate degradation; glycolysis; pyruvate from D-glyceraldehyde 3-phosphate: step 2/5. The polypeptide is Phosphoglycerate kinase (Pelodictyon phaeoclathratiforme (strain DSM 5477 / BU-1)).